A 216-amino-acid chain; its full sequence is Ribose-5-phosphate isomerase A (216 aa).

Residues 26–29, 79–82, and 92–95 each bind substrate; these read TGST, DGAD, and KGGG. E101 functions as the Proton acceptor in the catalytic mechanism. Substrate is bound at residue K119.

This sequence belongs to the ribose 5-phosphate isomerase family. As to quaternary structure, homodimer.

It catalyses the reaction aldehydo-D-ribose 5-phosphate = D-ribulose 5-phosphate. It functions in the pathway carbohydrate degradation; pentose phosphate pathway; D-ribose 5-phosphate from D-ribulose 5-phosphate (non-oxidative stage): step 1/1. Its function is as follows. Catalyzes the reversible conversion of ribose-5-phosphate to ribulose 5-phosphate. The protein is Ribose-5-phosphate isomerase A of Legionella pneumophila (strain Corby).